A 75-amino-acid polypeptide reads, in one-letter code: UPF0235 protein Mflv_3569 (75 aa).

This sequence belongs to the UPF0235 family.

The sequence is that of UPF0235 protein Mflv_3569 from Mycolicibacterium gilvum (strain PYR-GCK) (Mycobacterium gilvum (strain PYR-GCK)).